The sequence spans 385 residues: Photoreceptor ankyrin repeat protein (385 aa).

5 ANK repeats span residues 17-46 (CNLK…SPEE), 53-83 (NGRT…DVNQ), 87-116 (DGNT…GLDL), 122-151 (RGLT…DLSS), and 156-190 (RGKT…QLSL). The interval 270-385 (LGTRGKSVPE…GGLGQAGGSK (116 aa)) is disordered. Residues 284–297 (APPPPPEPHPPQQV) show a composition bias toward pro residues. Residues 304-326 (APNQSPQSMFSQWLQSRDSTRSQ) are compositionally biased toward polar residues. Residues 361–373 (FQERKKKEEETEP) show a composition bias toward basic and acidic residues. Residues 374-385 (RGGGLGQAGGSK) show a composition bias toward gly residues.

Isoform 1: Expressed predominantly in the retina. Isoform 2: Expressed in the pineal gland.

Its subcellular location is the cytoplasm. It localises to the cytosol. The protein resides in the nucleus. Its function is as follows. Acts as a transcriptional repressor for CRX-activated photoreceptor gene regulation. The chain is Photoreceptor ankyrin repeat protein from Mus musculus (Mouse).